Reading from the N-terminus, the 64-residue chain is Bubble protein (64 aa).

Intrachain disulfides connect Cys3-Cys30, Cys18-Cys38, Cys28-Cys54, and Cys49-Cys64.

Its subcellular location is the secreted. In terms of biological role, may act as a toxin. May recognize a molecule or part of a molecule with a negatively charged surface potential. This Penicillium brevicompactum protein is Bubble protein.